The following is a 799-amino-acid chain: High affinity nerve growth factor receptor (799 aa).

The first 33 residues, 1 to 33 (MLRGQRLGQLGWHRPAAGLGSLMTSLMLACASA), serve as a signal peptide directing secretion. The Extracellular segment spans residues 34–420 (ASCREVCCPV…VEKKDETPFG (387 aa)). Intrachain disulfides connect C36-C41 and C40-C50. N-linked (GlcNAc...) asparagine glycosylation is present at N67. 2 LRR repeats span residues 90–113 (LGEL…AFRF) and 116–137 (RLSH…TVQG). N121, N190, N204, N255, N264, N320, N325, N341, N361, and N404 each carry an N-linked (GlcNAc...) asparagine glycan. Positions 148-219 (NPLHCSCALF…GDDVFLQCQV (72 aa)) constitute an LRRCT domain. A disulfide bond links C154 and C193. Ig-like C2-type domains lie at 196–285 (PTVK…VSVS) and 205–368 (DSVE…LAAN). 2 disulfides stabilise this stretch: C217–C267 and C302–C348. A helical transmembrane segment spans residues 421-441 (VSVAVGLAVSAALFLSALLLV). Over 442–799 (LNKCGQRSKF…APPSYLDVLG (358 aa)) the chain is Cytoplasmic. The tract at residues 472-493 (MTLGGSSLSPTEGKGSGLQGHI) is interaction with SQSTM1. Y499 carries the post-translational modification Phosphotyrosine; by autocatalysis. Residues 513–784 (IILKWELGEG…LSMKDVHARL (272 aa)) form the Protein kinase domain. ATP contacts are provided by residues 519-527 (LGEGAFGKV) and K547. D653 acts as the Proton acceptor in catalysis. Y679, Y683, Y684, and Y794 each carry phosphotyrosine; by autocatalysis.

This sequence belongs to the protein kinase superfamily. Tyr protein kinase family. Insulin receptor subfamily. In terms of assembly, exists in a dynamic equilibrium between monomeric (low affinity) and dimeric (high affinity) structures. Homodimerization is induced by binding of a NGF dimer. Found in a complex, at least composed of KIDINS220, MAGI2, NTRK1 and RAPGEF2; the complex is mainly formed at late endosomes in a nerve growth factor (NGF)-dependent manner. Interacts with RAPGEF2; the interaction is strengthened after NGF stimulation. Interacts with SQSTM1; bridges NTRK1 to NGFR. Forms a ternary complex with NGFR and KIDINS220; this complex is affected by the expression levels of KIDINS220 and an increase in KIDINS220 expression leads to a decreased association of NGFR and NTRK1. Interacts (phosphorylated upon activation by NGF) with SHC1; mediates SHC1 phosphorylation and activation. Interacts (phosphorylated upon activation by NGF) with PLCG1; mediates PLCG1 phosphorylation and activation. Interacts (phosphorylated) with SH2B1 and SH2B2. Interacts with GRB2. Interacts with PIK3R1. Interacts with FRS2. Interacts with SORT1; may regulate NTRK1 anterograde axonal transport. Interacts with SH2D1A; regulates NTRK1. Interacts with NRADD. Interacts with RAB7A. Interacts with PTPRS. Interacts with USP36; USP36 does not deubiquitinate NTRK1. Interacts with GGA3. Interacts with TSPAN1; this interaction promotes NTRK1 stability. Ligand-mediated autophosphorylation. Interaction with SQSTM1 is phosphotyrosine-dependent. Autophosphorylation at Tyr-499 mediates interaction and phosphorylation of SHC1. Post-translationally, N-glycosylated. In terms of processing, ubiquitinated. Undergoes polyubiquitination upon activation; regulated by NGFR. Ubiquitination by NEDD4L leads to degradation. Ubiquitination regulates the internalization of the receptor.

It is found in the cell membrane. The protein resides in the early endosome membrane. The protein localises to the late endosome membrane. It localises to the recycling endosome membrane. The catalysed reaction is L-tyrosyl-[protein] + ATP = O-phospho-L-tyrosyl-[protein] + ADP + H(+). Its activity is regulated as follows. The pro-survival signaling effect of NTRK1 in neurons requires its endocytosis into signaling early endosomes and its retrograde axonal transport. This is regulated by different proteins including CFL1, RAC1 and SORT1. NTF3 is unable to induce this signaling probably due to the lability of the NTF3-NTRK1 complex in endosomes. SH2D1A inhibits the autophosphorylation of the receptor, and alters the recruitment and activation of downstream effectors and signaling cascades. Regulated by NGFR. Functionally, receptor tyrosine kinase involved in the development and the maturation of the central and peripheral nervous systems through regulation of proliferation, differentiation and survival of sympathetic and nervous neurons. High affinity receptor for NGF which is its primary ligand, it can also bind and be activated by NTF3/neurotrophin-3. However, NTF3 only supports axonal extension through NTRK1 but has no effect on neuron survival. Upon dimeric NGF ligand-binding, undergoes homodimerization, autophosphorylation and activation. Recruits, phosphorylates and/or activates several downstream effectors including SHC1, FRS2, SH2B1, SH2B2 and PLCG1 that regulate distinct overlapping signaling cascades driving cell survival and differentiation. Through SHC1 and FRS2 activates a GRB2-Ras-MAPK cascade that regulates cell differentiation and survival. Through PLCG1 controls NF-Kappa-B activation and the transcription of genes involved in cell survival. Through SHC1 and SH2B1 controls a Ras-PI3 kinase-AKT1 signaling cascade that is also regulating survival. In absence of ligand and activation, may promote cell death, making the survival of neurons dependent on trophic factors. The chain is High affinity nerve growth factor receptor (Ntrk1) from Mus musculus (Mouse).